A 78-amino-acid polypeptide reads, in one-letter code: Small ribosomal subunit protein eS17 (78 aa).

It belongs to the eukaryotic ribosomal protein eS17 family.

The polypeptide is Small ribosomal subunit protein eS17 (Sulfurisphaera tokodaii (strain DSM 16993 / JCM 10545 / NBRC 100140 / 7) (Sulfolobus tokodaii)).